A 185-amino-acid polypeptide reads, in one-letter code: Elongation factor P (185 aa).

It belongs to the elongation factor P family.

It localises to the cytoplasm. Its pathway is protein biosynthesis; polypeptide chain elongation. In terms of biological role, involved in peptide bond synthesis. Stimulates efficient translation and peptide-bond synthesis on native or reconstituted 70S ribosomes in vitro. Probably functions indirectly by altering the affinity of the ribosome for aminoacyl-tRNA, thus increasing their reactivity as acceptors for peptidyl transferase. The polypeptide is Elongation factor P (Clostridium botulinum (strain ATCC 19397 / Type A)).